Here is a 171-residue protein sequence, read N- to C-terminus: MTSTIYSDALFKLALKEDAIESIIEQFETFVSLARDYPDWIVLLDSPMIRNRVKNKMLTELGIFDALFMNFLMLLVRHHQVRLYEDIYEQWIAKSRLNQKIAYVQLYSAKPLSKKRLNQLKEEIQDYLPGLEIEFNQHIDPTLIEGVKMTYQGRSIERSLKKALDDMRTNI.

Belongs to the ATPase delta chain family. As to quaternary structure, F-type ATPases have 2 components, F(1) - the catalytic core - and F(0) - the membrane proton channel. F(1) has five subunits: alpha(3), beta(3), gamma(1), delta(1), epsilon(1). F(0) has three main subunits: a(1), b(2) and c(10-14). The alpha and beta chains form an alternating ring which encloses part of the gamma chain. F(1) is attached to F(0) by a central stalk formed by the gamma and epsilon chains, while a peripheral stalk is formed by the delta and b chains.

The protein localises to the cell membrane. In terms of biological role, f(1)F(0) ATP synthase produces ATP from ADP in the presence of a proton or sodium gradient. F-type ATPases consist of two structural domains, F(1) containing the extramembraneous catalytic core and F(0) containing the membrane proton channel, linked together by a central stalk and a peripheral stalk. During catalysis, ATP synthesis in the catalytic domain of F(1) is coupled via a rotary mechanism of the central stalk subunits to proton translocation. This protein is part of the stalk that links CF(0) to CF(1). It either transmits conformational changes from CF(0) to CF(1) or is implicated in proton conduction. This is ATP synthase subunit delta from Acholeplasma laidlawii (strain PG-8A).